The chain runs to 632 residues: Chaperone protein HtpG (632 aa).

Positions 1-339 (MTQQTMSFQA…SSDLPLNVSR (339 aa)) are a; substrate-binding. The tract at residues 340-559 (EILQESRDVK…DNDMSGYLQR (220 aa)) is b. Positions 560–632 (MLKAAGQNAP…TNALLLSRAA (73 aa)) are c.

Belongs to the heat shock protein 90 family. Homodimer.

The protein localises to the cytoplasm. Functionally, molecular chaperone. Has ATPase activity. In Burkholderia thailandensis (strain ATCC 700388 / DSM 13276 / CCUG 48851 / CIP 106301 / E264), this protein is Chaperone protein HtpG.